Here is a 174-residue protein sequence, read N- to C-terminus: Chorismate pyruvate-lyase (174 aa).

Substrate is bound by residues Met36, Arg78, Leu116, and Glu157.

It belongs to the UbiC family. Monomer.

The protein localises to the cytoplasm. It carries out the reaction chorismate = 4-hydroxybenzoate + pyruvate. It functions in the pathway cofactor biosynthesis; ubiquinone biosynthesis. Functionally, removes the pyruvyl group from chorismate, with concomitant aromatization of the ring, to provide 4-hydroxybenzoate (4HB) for the ubiquinone pathway. In Serratia proteamaculans (strain 568), this protein is Chorismate pyruvate-lyase.